The primary structure comprises 79 residues: ESX secretion system protein YukD (79 aa).

It belongs to the EsaB family.

Required for YukE secretion. Probable component or regulator of the ESX/ESAT-6-like secretion system (BsEss). In Bacillus subtilis (strain 168), this protein is ESX secretion system protein YukD (yukD).